The primary structure comprises 579 residues: Trehalase (579 aa).

An N-terminal signal peptide occupies residues 1 to 15; the sequence is MRLFLLLVGLTTVIA. Asn-29 and Asn-58 each carry an N-linked (GlcNAc...) asparagine glycan. Substrate contacts are provided by residues Arg-161, 168 to 169, Asn-205, 214 to 216, 279 to 281, and Gly-313; these read WD, RSQ, and RPE. Residue Asn-205 is glycosylated (N-linked (GlcNAc...) asparagine). The Proton donor/acceptor role is filled by Asp-315. An N-linked (GlcNAc...) asparagine glycan is attached at Asn-331. Glu-513 functions as the Proton donor/acceptor in the catalytic mechanism. Glu-528 contacts substrate. The segment covering 560–569 has biased composition (polar residues); sequence DASANNGQSN. The disordered stretch occupies residues 560-579; the sequence is DASANNGQSNEESETDSKEK.

This sequence belongs to the glycosyl hydrolase 37 family. As to expression, in midgut and Malpighian tubules.

It localises to the basolateral cell membrane. The enzyme catalyses alpha,alpha-trehalose + H2O = alpha-D-glucose + beta-D-glucose. In terms of biological role, involved in uptake of hemolymph trehalose into epithelial cells in the midgut of feeding larvae. This Bombyx mori (Silk moth) protein is Trehalase.